A 344-amino-acid chain; its full sequence is Ribosomal RNA large subunit methyltransferase Cfr (344 aa).

Residue Glu90 is the Proton acceptor of the active site. Residues 97–330 (KQGWESFCIS…ATVRTQFGSE (234 aa)) form the Radical SAM core domain. Residues Cys104 and Cys335 are joined by a disulfide bond. Residues Cys111, Cys115, and Cys118 each contribute to the [4Fe-4S] cluster site. S-adenosyl-L-methionine contacts are provided by residues 157–158 (GE), Ser188, 211–213 (SLH), and Asn292. Cys335 acts as the S-methylcysteine intermediate in catalysis.

The protein belongs to the radical SAM superfamily. RlmN family. Cfr subfamily. The cofactor is [4Fe-4S] cluster.

The protein resides in the cytoplasm. The enzyme catalyses adenosine(2503) in 23S rRNA + 2 reduced [2Fe-2S]-[ferredoxin] + 2 S-adenosyl-L-methionine = 8-methyladenosine(2503) in 23S rRNA + 5'-deoxyadenosine + L-methionine + 2 oxidized [2Fe-2S]-[ferredoxin] + S-adenosyl-L-homocysteine. In terms of biological role, specifically methylates position 8 of adenine 2503 in 23S rRNA. Confers resistance to some classes of antibiotics. The sequence is that of Ribosomal RNA large subunit methyltransferase Cfr from Clostridium botulinum (strain Okra / Type B1).